The sequence spans 109 residues: Large ribosomal subunit protein uL23 (109 aa).

This sequence belongs to the universal ribosomal protein uL23 family. Part of the 50S ribosomal subunit. Contacts protein L29, and trigger factor when it is bound to the ribosome.

In terms of biological role, one of the early assembly proteins it binds 23S rRNA. One of the proteins that surrounds the polypeptide exit tunnel on the outside of the ribosome. Forms the main docking site for trigger factor binding to the ribosome. The chain is Large ribosomal subunit protein uL23 from Chlorobium phaeobacteroides (strain BS1).